We begin with the raw amino-acid sequence, 420 residues long: UDP-N-acetylglucosamine 1-carboxyvinyltransferase (420 aa).

Residue 22-23 coordinates phosphoenolpyruvate; the sequence is KN. R91 serves as a coordination point for UDP-N-acetyl-alpha-D-glucosamine. C115 (proton donor) is an active-site residue. C115 carries the post-translational modification 2-(S-cysteinyl)pyruvic acid O-phosphothioketal. Residues 120 to 124, 160 to 163, D305, and I327 contribute to the UDP-N-acetyl-alpha-D-glucosamine site; these read RPVDL and KVSV.

Belongs to the EPSP synthase family. MurA subfamily.

It localises to the cytoplasm. It carries out the reaction phosphoenolpyruvate + UDP-N-acetyl-alpha-D-glucosamine = UDP-N-acetyl-3-O-(1-carboxyvinyl)-alpha-D-glucosamine + phosphate. Its pathway is cell wall biogenesis; peptidoglycan biosynthesis. Functionally, cell wall formation. Adds enolpyruvyl to UDP-N-acetylglucosamine. The chain is UDP-N-acetylglucosamine 1-carboxyvinyltransferase from Proteus mirabilis (strain HI4320).